The primary structure comprises 455 residues: MSQRKYFGTDGIRGHVGLSNINPEFVLKLGWAVGCVLANGARKKVVIGKDTRVSGYMLESALEAGLSAAGVDVALLGPMPTPGIAYLTQTLRANAGIVISASHNLFEDNGIKFFSADGGKLPDSVELAIEAQLEKQLQTVPSVKLGKATRINDAAGRYIEFCKSTIPSLSRLSNLKIVVDCANGATYHIAPNVFSELGADVVPIGIKPDGFNINQECGSTAPELLREKVIAVGADIGIGLDGDGDRVILVDSLGNLVDGDQIIYIIAKDRHQRGVLHGGVVGTLMSNYGLELAITSLGVPFQRSKVGDRYVLETLREKDWKIGGETSGHIVCLDKTTTGDGIVAALQVLSIMVKQNKALHELTAGIQLLPQTLVNLKTNNAALLASNPDVIQAVKNLEKHLNGEGRVLLRPSGTEPLLRVMVEGANASIVKQQAQMLCDDISQIDKKLTESLPST.

Catalysis depends on Ser102, which acts as the Phosphoserine intermediate. 4 residues coordinate Mg(2+): Ser102, Asp241, Asp243, and Asp245. At Ser102 the chain carries Phosphoserine.

The protein belongs to the phosphohexose mutase family. Mg(2+) is required as a cofactor. In terms of processing, activated by phosphorylation.

The enzyme catalyses alpha-D-glucosamine 1-phosphate = D-glucosamine 6-phosphate. Functionally, catalyzes the conversion of glucosamine-6-phosphate to glucosamine-1-phosphate. The sequence is that of Phosphoglucosamine mutase from Legionella pneumophila (strain Corby).